Reading from the N-terminus, the 66-residue chain is Protein I177L (66 aa).

It belongs to the asfivirus I177L family.

The protein resides in the virion. The protein is Protein I177L of Ornithodoros (relapsing fever ticks).